The sequence spans 94 residues: uncharacterized protein (94 aa).

Positions Met1–Ala26 are cleaved as a signal peptide. Transmembrane regions (helical) follow at residues Leu42–Trp62 and Phe71–Leu91.

It localises to the cell membrane. This is an uncharacterized protein from Mycobacterium tuberculosis (strain CDC 1551 / Oshkosh).